The chain runs to 261 residues: 4-hydroxy-tetrahydrodipicolinate reductase (261 aa).

8–13 provides a ligand contact to NAD(+); that stretch reads GYKGRM. R36 contributes to the NADP(+) binding site. NAD(+)-binding positions include 95-97 and 121-124; these read GTT and APNF. H151 (proton donor/acceptor) is an active-site residue. Residue H152 coordinates (S)-2,3,4,5-tetrahydrodipicolinate. The active-site Proton donor is K155. 161–162 serves as a coordination point for (S)-2,3,4,5-tetrahydrodipicolinate; the sequence is GT.

The protein belongs to the DapB family.

It localises to the cytoplasm. The catalysed reaction is (S)-2,3,4,5-tetrahydrodipicolinate + NAD(+) + H2O = (2S,4S)-4-hydroxy-2,3,4,5-tetrahydrodipicolinate + NADH + H(+). It carries out the reaction (S)-2,3,4,5-tetrahydrodipicolinate + NADP(+) + H2O = (2S,4S)-4-hydroxy-2,3,4,5-tetrahydrodipicolinate + NADPH + H(+). It participates in amino-acid biosynthesis; L-lysine biosynthesis via DAP pathway; (S)-tetrahydrodipicolinate from L-aspartate: step 4/4. In terms of biological role, catalyzes the conversion of 4-hydroxy-tetrahydrodipicolinate (HTPA) to tetrahydrodipicolinate. The protein is 4-hydroxy-tetrahydrodipicolinate reductase of Lactiplantibacillus plantarum (strain ATCC BAA-793 / NCIMB 8826 / WCFS1) (Lactobacillus plantarum).